Consider the following 442-residue polypeptide: Tyrosine--tRNA ligase (442 aa).

Position 55 (Y55) interacts with L-tyrosine. A 'HIGH' region motif is present at residues 60-69; the sequence is PTAPSLHLGN. 2 residues coordinate L-tyrosine: Y190 and Q194. The 'KMSKS' region signature appears at 250–254; sequence KFGKS. ATP is bound at residue K253. The 66-residue stretch at 373 to 438 folds into the S4 RNA-binding domain; the sequence is VAIAQALVDT…GKKTLAGVFV (66 aa).

This sequence belongs to the class-I aminoacyl-tRNA synthetase family. TyrS type 1 subfamily. Homodimer.

It localises to the cytoplasm. The enzyme catalyses tRNA(Tyr) + L-tyrosine + ATP = L-tyrosyl-tRNA(Tyr) + AMP + diphosphate + H(+). Catalyzes the attachment of tyrosine to tRNA(Tyr) in a two-step reaction: tyrosine is first activated by ATP to form Tyr-AMP and then transferred to the acceptor end of tRNA(Tyr). This is Tyrosine--tRNA ligase from Leifsonia xyli subsp. xyli (strain CTCB07).